We begin with the raw amino-acid sequence, 556 residues long: 2-succinyl-5-enolpyruvyl-6-hydroxy-3-cyclohexene-1-carboxylate synthase (556 aa).

Belongs to the TPP enzyme family. MenD subfamily. Homodimer. It depends on Mg(2+) as a cofactor. Mn(2+) is required as a cofactor. The cofactor is thiamine diphosphate.

It carries out the reaction isochorismate + 2-oxoglutarate + H(+) = 5-enolpyruvoyl-6-hydroxy-2-succinyl-cyclohex-3-ene-1-carboxylate + CO2. Its pathway is quinol/quinone metabolism; 1,4-dihydroxy-2-naphthoate biosynthesis; 1,4-dihydroxy-2-naphthoate from chorismate: step 2/7. The protein operates within quinol/quinone metabolism; menaquinone biosynthesis. Functionally, catalyzes the thiamine diphosphate-dependent decarboxylation of 2-oxoglutarate and the subsequent addition of the resulting succinic semialdehyde-thiamine pyrophosphate anion to isochorismate to yield 2-succinyl-5-enolpyruvyl-6-hydroxy-3-cyclohexene-1-carboxylate (SEPHCHC). The chain is 2-succinyl-5-enolpyruvyl-6-hydroxy-3-cyclohexene-1-carboxylate synthase from Escherichia coli O45:K1 (strain S88 / ExPEC).